Here is a 491-residue protein sequence, read N- to C-terminus: Chondroitin proteoglycan 2 (491 aa).

A signal peptide spans 1–18; sequence MKTIVALGLLALATAASG. Residues 21–78 enclose the Chitin-binding type-2 1 domain; the sequence is LQDCTNALDGLYAIGNCESQFLTCSGGIARIMDCPADLIYNEPLLICDWRHNVVGCEG. The cysteines at positions 54 and 67 are disulfide-linked. A disordered region spans residues 80-126; that stretch reads GEASGEQSGEGSGEASGEGSGEASGEGSGEASGEGSGSGEGSGEENN. The segment covering 87–120 has biased composition (gly residues); the sequence is SGEGSGEASGEGSGEASGEGSGEASGEGSGSGEG. The Chitin-binding type-2 2 domain occupies 125 to 182; sequence NNVCEGLEDGAYSSGGCTTYYFFCTDNTARFLSCPTPLFYDVATQKCAWKALVEECNG. A disulfide bond links cysteine 158 and cysteine 171. The segment at 187–217 is disordered; that stretch reads DGSGETSGEGSGEASGENSGENSGEGSGEFE. Residues serine 197 and serine 201 are each glycosylated (O-linked (Xyl...) (chondroitin sulfate) serine). Low complexity predominate over residues 200-210; the sequence is ASGENSGENSG. Chitin-binding type-2 domains are found at residues 217-274, 279-334, 367-423, and 436-491; these read EPTC…ECHG, APVC…ECQE, ENEC…KCLI, and PFDC…LQCH. 2 disulfide bridges follow: cysteine 250–cysteine 263 and cysteine 310–cysteine 323. The disordered stretch occupies residues 336-367; the sequence is SGEESSGEASGEQSGEGSGEASGEASGEASGE. Over residues 356 to 367 the composition is skewed to low complexity; it reads ASGEASGEASGE. A disulfide bond links cysteine 399 and cysteine 412. The N-linked (GlcNAc...) asparagine glycan is linked to asparagine 464. Residues cysteine 467 and cysteine 481 are joined by a disulfide bond.

Functionally, required for polar body extrusion during cytokinesis in embryo development. Affects cortical granule size. Shown to have roles in meiotic chromosome segregation, osmotic barrier function and polarization in conjunction with cpg-2. Binds chitin. In Caenorhabditis briggsae, this protein is Chondroitin proteoglycan 2.